The sequence spans 1502 residues: tRNA (32-2'-O)-methyltransferase regulator trm732 (1502 aa).

Belongs to the THADA family.

Its subcellular location is the cytoplasm. It localises to the nucleus. Its function is as follows. Together with methyltransferase trm7, methylates the 2'-O-ribose of nucleotides at position 32 of the anticodon loop of substrate tRNAs. The chain is tRNA (32-2'-O)-methyltransferase regulator trm732 from Schizosaccharomyces pombe (strain 972 / ATCC 24843) (Fission yeast).